Consider the following 713-residue polypeptide: Polyribonucleotide nucleotidyltransferase (713 aa).

Positions 488 and 494 each coordinate Mg(2+). The KH domain maps to 555–614 (PRIEVMNIPTDKIRDVIGSGGKVIREIVEKTGAKINIEDDGTVKIASSNGKEIEAAKKWI). One can recognise an S1 motif domain in the interval 624–692 (GEIYEGTVVK…ERGKVRLSMK (69 aa)).

The protein belongs to the polyribonucleotide nucleotidyltransferase family. Mg(2+) is required as a cofactor.

The protein resides in the cytoplasm. It catalyses the reaction RNA(n+1) + phosphate = RNA(n) + a ribonucleoside 5'-diphosphate. Involved in mRNA degradation. Catalyzes the phosphorolysis of single-stranded polyribonucleotides processively in the 3'- to 5'-direction. This chain is Polyribonucleotide nucleotidyltransferase, found in Brucella anthropi (strain ATCC 49188 / DSM 6882 / CCUG 24695 / JCM 21032 / LMG 3331 / NBRC 15819 / NCTC 12168 / Alc 37) (Ochrobactrum anthropi).